The sequence spans 259 residues: Dihydroorotate dehydrogenase B (NAD(+)), electron transfer subunit (259 aa).

The FAD-binding FR-type domain occupies 2–102 (MQKQNMIVVN…LGPLGHGFPV (101 aa)). Residues 53-56 (RPIS), 70-72 (LYR), and 77-78 (GT) contribute to the FAD site. C221, C226, C229, and C246 together coordinate [2Fe-2S] cluster.

It belongs to the PyrK family. Heterotetramer of 2 PyrK and 2 PyrD type B subunits. [2Fe-2S] cluster serves as cofactor. FAD is required as a cofactor.

The protein operates within pyrimidine metabolism; UMP biosynthesis via de novo pathway; orotate from (S)-dihydroorotate (NAD(+) route): step 1/1. Its function is as follows. Responsible for channeling the electrons from the oxidation of dihydroorotate from the FMN redox center in the PyrD type B subunit to the ultimate electron acceptor NAD(+). The chain is Dihydroorotate dehydrogenase B (NAD(+)), electron transfer subunit from Bacillus cereus (strain G9842).